A 489-amino-acid polypeptide reads, in one-letter code: Blue-light-activated histidine kinase (489 aa).

One can recognise a PAS domain in the interval 19–93; that stretch reads ATDPFRAAVE…AIKSAIAAEK (75 aa). An S-4a-FMN cysteine modification is found at cysteine 69. PAC domains lie at 93 to 147 and 232 to 281; these read KPID…ELEK and YSIE…NKAL. The interval 259-341 is HWE histidine kinase domain; it reads NPLVLGIVQD…LLKENWAGAT (83 aa). Residue histidine 288 is modified to Phosphohistidine; by autocatalysis.

Post-translationally, FMN binds covalently to cysteine after exposure to blue light and this bond is spontaneously broken in the dark.

The catalysed reaction is ATP + protein L-histidine = ADP + protein N-phospho-L-histidine.. Its function is as follows. Photosensitive kinase that is involved in increased bacterial virulence upon exposure to light. Once ejected from an infected animal host, sunlight acts as an environmental signal that increases the virulence of the bacterium, preparing it for infection of the next host. This photoreceptor protein is directly related to the bacterium's survival and replication within host macrophages. The protein is Blue-light-activated histidine kinase of Brucella ovis (strain ATCC 25840 / 63/290 / NCTC 10512).